The following is a 143-amino-acid chain: Meiotically up-regulated gene 128 protein (143 aa).

Functionally, has a role in meiosis. The protein is Meiotically up-regulated gene 128 protein (mug128) of Schizosaccharomyces pombe (strain 972 / ATCC 24843) (Fission yeast).